We begin with the raw amino-acid sequence, 114 residues long: Small ribosomal subunit protein uS17 (114 aa).

The protein belongs to the universal ribosomal protein uS17 family. As to quaternary structure, part of the 30S ribosomal subunit.

One of the primary rRNA binding proteins, it binds specifically to the 5'-end of 16S ribosomal RNA. This is Small ribosomal subunit protein uS17 from Saccharolobus solfataricus (strain ATCC 35092 / DSM 1617 / JCM 11322 / P2) (Sulfolobus solfataricus).